The chain runs to 344 residues: Nuclear distribution protein nudE homolog 1 (344 aa).

Residues 1 to 93 are self-association; that stretch reads MEDSGKTFES…MQHSEGYRQI (93 aa). Residues 18–188 are a coiled coil; the sequence is WRDLAMTYKQ…ELAVQQKQDK (171 aa). An interaction with PAFAH1B1 region spans residues 88 to 156; the sequence is EGYRQISALE…ERNAFLESEL (69 aa). Positions 167–290 are interaction with CENPF; the sequence is QRLKDEARDL…QSPSRTSGPA (124 aa). The segment at 181 to 246 is disordered; sequence AVQQKQDKPR…DSSTSGTPLT (66 aa). Serine 211 carries the phosphoserine modification. Residues threonine 215 and threonine 228 each carry the phosphothreonine modification. At serine 239 the chain carries Phosphoserine. 2 positions are modified to phosphothreonine: threonine 243 and threonine 246. Residue cysteine 274 is the site of S-palmitoyl cysteine; by ZDHHC2, ZDHHC3 and ZDHHC7 attachment. Residues 279-289 show a composition bias toward polar residues; it reads YDQSPSRTSGP. Residues 279 to 337 form a disordered region; the sequence is YDQSPSRTSGPASGRGTKNRDGVDRRPGSTSVGDKGSGKRLEFGKPASEPASPALPSAQ. Position 282 is a phosphoserine (serine 282). The span at 296-305 shows a compositional bias: basic and acidic residues; that stretch reads KNRDGVDRRP. A Phosphoserine modification is found at serine 309. A compositionally biased stretch (low complexity) spans 324-336; it reads PASEPASPALPSA.

It belongs to the nudE family. In terms of assembly, homodimer. Interacts with dynactin and PCM1. Interacts with CENPF, LIS1, CNTRL, dynein, tubulin gamma, PAFAH1B1, PCNT, SLMAP and TCP1. Interacts with ZNF365. Interacts with RAB9A; the interaction leads to RAB9A-dynein motor tethering. Interacts (via C-terminus) with MCRS1 (via C-terminus); phosphorylation of NDE1 inhibits the interaction. In terms of processing, phosphorylated in mitosis. Phosphorylation at Thr-246 is essential for the G2/M transition. In terms of tissue distribution, highly expressed in ovary. Also expressed in brain, heart, kidney, large intestine, liver, lung, small intestine and testis.

It localises to the cytoplasm. The protein localises to the cytoskeleton. The protein resides in the microtubule organizing center. It is found in the centrosome. Its subcellular location is the spindle. It localises to the chromosome. The protein localises to the centromere. The protein resides in the kinetochore. It is found in the cleavage furrow. Its subcellular location is the cytoplasmic vesicle membrane. In terms of biological role, required for centrosome duplication and formation and function of the mitotic spindle. Essential for the development of the cerebral cortex. May regulate the production of neurons by controlling the orientation of the mitotic spindle during division of cortical neuronal progenitors of the proliferative ventricular zone of the brain. Orientation of the division plane perpendicular to the layers of the cortex gives rise to two proliferative neuronal progenitors whereas parallel orientation of the division plane yields one proliferative neuronal progenitor and a postmitotic neuron. A premature shift towards a neuronal fate within the progenitor population may result in an overall reduction in the final number of neurons and an increase in the number of neurons in the deeper layers of the cortex. Acts as a RAB9A/B effector that tethers RAB9-associated late endosomes to the dynein motor for their retrograde transport to the trans-Golgi network. This chain is Nuclear distribution protein nudE homolog 1, found in Mus musculus (Mouse).